A 186-amino-acid polypeptide reads, in one-letter code: Ribosome-recycling factor (186 aa).

A disordered region spans residues 144 to 163; it reads EKDGVIGQDESRAQSERVQK.

It belongs to the RRF family.

The protein resides in the cytoplasm. Its function is as follows. Responsible for the release of ribosomes from messenger RNA at the termination of protein biosynthesis. May increase the efficiency of translation by recycling ribosomes from one round of translation to another. This chain is Ribosome-recycling factor, found in Rhizobium johnstonii (strain DSM 114642 / LMG 32736 / 3841) (Rhizobium leguminosarum bv. viciae).